The chain runs to 427 residues: DEAD-box ATP-dependent RNA helicase 56 (427 aa).

The disordered stretch occupies residues 1–30; sequence MGDARDNEAYEEELLDYEEEDEKVPDSGNK. The span at 9–23 shows a compositional bias: acidic residues; that stretch reads AYEEELLDYEEEDEK. The short motif at 46 to 74 is the Q motif element; sequence SGFRDFLLKPELLRAIVDSGFEHPSEVQH. The Helicase ATP-binding domain occupies 77–250; that stretch reads IPQAILGMDV…KKFMQDPMEI (174 aa). 90–97 is a binding site for ATP; sequence AKSGMGKT. Residues 197–200 carry the DECD box motif; the sequence is DECD. Residues 278-423 form the Helicase C-terminal domain; sequence KLNDLLDALD…ELPEQIDTST (146 aa).

It belongs to the DEAD box helicase family. DECD subfamily. In terms of assembly, interacts with ALY2 and MOS11.

The protein resides in the nucleus. It carries out the reaction ATP + H2O = ADP + phosphate + H(+). Its function is as follows. ATP-dependent RNA helicase involved in pre-mRNA splicing. Required for the export of mRNA out of the nucleus. In addition to ssRNA and dsRNA, binds dsDNA, but not ssDNA. This chain is DEAD-box ATP-dependent RNA helicase 56 (RH56), found in Arabidopsis thaliana (Mouse-ear cress).